A 156-amino-acid chain; its full sequence is Ribosomal RNA large subunit methyltransferase H (156 aa).

Residues glycine 104 and 123–128 (LSAMTL) each bind S-adenosyl-L-methionine.

The protein belongs to the RNA methyltransferase RlmH family. As to quaternary structure, homodimer.

It localises to the cytoplasm. The catalysed reaction is pseudouridine(1915) in 23S rRNA + S-adenosyl-L-methionine = N(3)-methylpseudouridine(1915) in 23S rRNA + S-adenosyl-L-homocysteine + H(+). Functionally, specifically methylates the pseudouridine at position 1915 (m3Psi1915) in 23S rRNA. This is Ribosomal RNA large subunit methyltransferase H from Chromobacterium violaceum (strain ATCC 12472 / DSM 30191 / JCM 1249 / CCUG 213 / NBRC 12614 / NCIMB 9131 / NCTC 9757 / MK).